We begin with the raw amino-acid sequence, 373 residues long: Opsin Rh1 (373 aa).

Topologically, residues Met1–Thr54 are extracellular. An N-linked (GlcNAc...) asparagine glycan is attached at Asn20. Residues Ala55–Phe75 form a helical membrane-spanning segment. Topologically, residues Ala76 to Asn86 are cytoplasmic. A helical transmembrane segment spans residues Leu87–Met107. The Extracellular portion of the chain corresponds to Gly108–Asp124. A disulfide bond links Cys123 and Cys200. A helical membrane pass occupies residues Ile125–Ser145. Topologically, residues Leu146–Thr162 are cytoplasmic. Residues Ile163–Ala183 form a helical membrane-spanning segment. Over Pro184–Ser219 the chain is Extracellular. N-linked (GlcNAc...) asparagine glycosylation is present at Asn196. The chain crosses the membrane as a helical span at residues Ile220 to Ala240. Residues Val241–Lys276 are Cytoplasmic-facing. The chain crosses the membrane as a helical span at residues Val277–Cys297. The Extracellular segment spans residues Met298 to Pro308. Residues Leu309–Ile331 traverse the membrane as a helical segment. Lys319 carries the post-translational modification N6-(retinylidene)lysine. Over Ser332–Ala373 the chain is Cytoplasmic. Residues Asp354–Ala373 are disordered. Over residues Ser358–Ala373 the composition is skewed to polar residues.

This sequence belongs to the G-protein coupled receptor 1 family. Opsin subfamily. In terms of processing, phosphorylated on some or all of the serine and threonine residues present in the C-terminal region.

The protein localises to the cell projection. It localises to the rhabdomere membrane. In terms of biological role, visual pigments are the light-absorbing molecules that mediate vision. They consist of an apoprotein, opsin, covalently linked to cis-retinal. The chain is Opsin Rh1 (ninaE) from Drosophila pseudoobscura pseudoobscura (Fruit fly).